The chain runs to 218 residues: Hypoxanthine-guanine phosphoribosyltransferase (218 aa).

The residue at position 2 (Ala2) is an N-acetylalanine. Position 69 (Lys69) interacts with GMP. Lys103 carries the post-translational modification N6-acetyllysine. Lys115 is covalently cross-linked (Glycyl lysine isopeptide (Lys-Gly) (interchain with G-Cter in SUMO1); alternate). Lys115 is covalently cross-linked (Glycyl lysine isopeptide (Lys-Gly) (interchain with G-Cter in SUMO2); alternate). GMP is bound by residues 134–142, Lys166, 186–188, and Asp194; these read EDIIDTGKT and KFV. Asp138 acts as the Proton acceptor in catalysis. Thr142 is modified (phosphothreonine). Residue Asp194 participates in Mg(2+) binding.

This sequence belongs to the purine/pyrimidine phosphoribosyltransferase family. In terms of assembly, homotetramer. Mg(2+) serves as cofactor.

The protein resides in the cytoplasm. The catalysed reaction is IMP + diphosphate = hypoxanthine + 5-phospho-alpha-D-ribose 1-diphosphate. It carries out the reaction GMP + diphosphate = guanine + 5-phospho-alpha-D-ribose 1-diphosphate. It functions in the pathway purine metabolism; IMP biosynthesis via salvage pathway; IMP from hypoxanthine: step 1/1. Its function is as follows. Converts guanine to guanosine monophosphate, and hypoxanthine to inosine monophosphate. Transfers the 5-phosphoribosyl group from 5-phosphoribosylpyrophosphate onto the purine. Plays a central role in the generation of purine nucleotides through the purine salvage pathway. The sequence is that of Hypoxanthine-guanine phosphoribosyltransferase (HPRT1) from Sus scrofa (Pig).